A 223-amino-acid chain; its full sequence is Ribosomal RNA small subunit methyltransferase G (223 aa).

Residues Gly-84, Leu-89, Val-135–Glu-136, and Arg-150 each bind S-adenosyl-L-methionine.

This sequence belongs to the methyltransferase superfamily. RNA methyltransferase RsmG family.

It is found in the cytoplasm. The catalysed reaction is guanosine(527) in 16S rRNA + S-adenosyl-L-methionine = N(7)-methylguanosine(527) in 16S rRNA + S-adenosyl-L-homocysteine. Functionally, specifically methylates the N7 position of guanine in position 527 of 16S rRNA. The polypeptide is Ribosomal RNA small subunit methyltransferase G (Saccharophagus degradans (strain 2-40 / ATCC 43961 / DSM 17024)).